Consider the following 271-residue polypeptide: Tryptophan synthase alpha chain (271 aa).

Active-site proton acceptor residues include E49 and D60.

Belongs to the TrpA family. In terms of assembly, tetramer of two alpha and two beta chains.

It carries out the reaction (1S,2R)-1-C-(indol-3-yl)glycerol 3-phosphate + L-serine = D-glyceraldehyde 3-phosphate + L-tryptophan + H2O. Its pathway is amino-acid biosynthesis; L-tryptophan biosynthesis; L-tryptophan from chorismate: step 5/5. In terms of biological role, the alpha subunit is responsible for the aldol cleavage of indoleglycerol phosphate to indole and glyceraldehyde 3-phosphate. The polypeptide is Tryptophan synthase alpha chain (Burkholderia thailandensis (strain ATCC 700388 / DSM 13276 / CCUG 48851 / CIP 106301 / E264)).